A 232-amino-acid polypeptide reads, in one-letter code: Phosphatidylserine decarboxylase proenzyme (232 aa).

Ser201 serves as the catalytic Schiff-base intermediate with substrate; via pyruvic acid. A Pyruvic acid (Ser); by autocatalysis modification is found at Ser201.

Belongs to the phosphatidylserine decarboxylase family. PSD-A subfamily. In terms of assembly, heterodimer of a large membrane-associated beta subunit and a small pyruvoyl-containing alpha subunit. It depends on pyruvate as a cofactor. In terms of processing, is synthesized initially as an inactive proenzyme. Formation of the active enzyme involves a self-maturation process in which the active site pyruvoyl group is generated from an internal serine residue via an autocatalytic post-translational modification. Two non-identical subunits are generated from the proenzyme in this reaction, and the pyruvate is formed at the N-terminus of the alpha chain, which is derived from the carboxyl end of the proenzyme. The post-translation cleavage follows an unusual pathway, termed non-hydrolytic serinolysis, in which the side chain hydroxyl group of the serine supplies its oxygen atom to form the C-terminus of the beta chain, while the remainder of the serine residue undergoes an oxidative deamination to produce ammonia and the pyruvoyl prosthetic group on the alpha chain.

Its subcellular location is the cell membrane. The enzyme catalyses a 1,2-diacyl-sn-glycero-3-phospho-L-serine + H(+) = a 1,2-diacyl-sn-glycero-3-phosphoethanolamine + CO2. The protein operates within phospholipid metabolism; phosphatidylethanolamine biosynthesis; phosphatidylethanolamine from CDP-diacylglycerol: step 2/2. In terms of biological role, catalyzes the formation of phosphatidylethanolamine (PtdEtn) from phosphatidylserine (PtdSer). The polypeptide is Phosphatidylserine decarboxylase proenzyme (Mycolicibacterium gilvum (strain PYR-GCK) (Mycobacterium gilvum (strain PYR-GCK))).